A 179-amino-acid polypeptide reads, in one-letter code: Large ribosomal subunit protein uL5 (179 aa).

This sequence belongs to the universal ribosomal protein uL5 family. As to quaternary structure, part of the 50S ribosomal subunit; part of the 5S rRNA/L5/L18/L25 subcomplex. Contacts the 5S rRNA and the P site tRNA. Forms a bridge to the 30S subunit in the 70S ribosome.

This is one of the proteins that bind and probably mediate the attachment of the 5S RNA into the large ribosomal subunit, where it forms part of the central protuberance. In the 70S ribosome it contacts protein S13 of the 30S subunit (bridge B1b), connecting the 2 subunits; this bridge is implicated in subunit movement. Contacts the P site tRNA; the 5S rRNA and some of its associated proteins might help stabilize positioning of ribosome-bound tRNAs. This is Large ribosomal subunit protein uL5 from Alkaliphilus oremlandii (strain OhILAs) (Clostridium oremlandii (strain OhILAs)).